The following is a 462-amino-acid chain: EPD1-interacting receptor-like cytoplasmic serine/threonine-protein kinase 5A (462 aa).

Positions 85–366 constitute a Protein kinase domain; sequence FSSANFLGEG…DVVNILEPLL (282 aa). Residues 91–99 and K120 each bind ATP; that span reads LGEGGFGPV. A phosphotyrosine mark is found at Y165 and Y167. Residue D215 is the Proton acceptor of the active site.

The protein belongs to the protein kinase superfamily. Ser/Thr protein kinase family. Interacts with the Verticillium dahliae elicitor EPD1 (AC G2WWH6). Post-translationally, phosphorylated at Tyr-165 and Tyr-167 in the presence of pathogen-associated molecular patterns (PAMPs); this triggers the expression of pathogenesis-related genes (e.g. PR5 and PR16). As to expression, mostly expressed in roots and, to a lesser extent, in leaves.

The protein localises to the cell membrane. The enzyme catalyses L-seryl-[protein] + ATP = O-phospho-L-seryl-[protein] + ADP + H(+). The catalysed reaction is L-threonyl-[protein] + ATP = O-phospho-L-threonyl-[protein] + ADP + H(+). In terms of biological role, required for pathogen-associated molecular pattern (PAMP, e.g. chitin and flg22)-triggered immunity (PTI) involving reactive oxygen species (ROS) accumulation and triggering plant defense, including defense-related gene expression (e.g. PR1 and LOX). Ensures specific recognition of the EPD1 effector of Verticillium dahliae, resulting in a hypersensitive response known as effector-triggered immunity (ETI), characterized by the activation of programmed cell death to limit infection by the pathogen. Priming plants with the incompatible pathogen V.dahliae leads to an increased resistance to compatible pathogens, as a result of systemic acquired resistance (SAR). The protein is EPD1-interacting receptor-like cytoplasmic serine/threonine-protein kinase 5A of Gossypium barbadense (Sea Island cotton).